The sequence spans 342 residues: uncharacterized protein (342 aa).

The protein belongs to the cycloisomerase 2 family.

This is an uncharacterized protein from Staphylococcus aureus (strain NCTC 8325 / PS 47).